A 437-amino-acid chain; its full sequence is Probable eukaryotic translation initiation factor 5-2 (437 aa).

29-36 provides a ligand contact to GTP; the sequence is GKGNGIKT. Basic and acidic residues-rich tracts occupy residues 148 to 179 and 191 to 212; these read EQKKVSKDKKAMRKAEKERLKEGELADEEQRK and KDSKTSKNHSSDEDISPKHDEN. 2 disordered regions span residues 148–231 and 262–284; these read EQKK…WQTD and EKKAPKSKSNGNVVKTENPPPQE. Ser201 is modified (phosphoserine; by CK2). Acidic residues predominate over residues 213 to 226; that stretch reads ALEVDEDEDDDDGV. Thr230 bears the Phosphothreonine; by CK2 mark. Residues 278–436 enclose the W2 domain; sequence ENPPPQEKNL…QSAESESEEE (159 aa). 3 positions are modified to phosphoserine; by CK2: Ser428, Ser431, and Ser433.

Belongs to the eIF-2-beta/eIF-5 family. Phosphorylated at Ser-201, Thr-230, Ser-428, Ser-431, and Ser-433 by CK2.

In terms of biological role, catalyzes the hydrolysis of GTP bound to the 40S ribosomal initiation complex (40S.mRNA.Met-tRNA[F].eIF-2.GTP) with the subsequent joining of a 60S ribosomal subunit resulting in the release of eIF-2 and the guanine nucleotide. The subsequent joining of a 60S ribosomal subunit results in the formation of a functional 80S initiation complex (80S.mRNA.Met-tRNA[F]). The protein is Probable eukaryotic translation initiation factor 5-2 of Arabidopsis thaliana (Mouse-ear cress).